We begin with the raw amino-acid sequence, 540 residues long: Alanine aminotransferase 2 (540 aa).

K358 bears the N6-(pyridoxal phosphate)lysine mark.

It belongs to the class-I pyridoxal-phosphate-dependent aminotransferase family. Alanine aminotransferase subfamily. Homodimer. Pyridoxal 5'-phosphate is required as a cofactor.

The catalysed reaction is L-alanine + 2-oxoglutarate = pyruvate + L-glutamate. It participates in amino-acid degradation; L-alanine degradation via transaminase pathway; pyruvate from L-alanine: step 1/1. Its function is as follows. Catalyzes the reversible transamination between alanine and 2-oxoglutarate to form pyruvate and glutamate. This chain is Alanine aminotransferase 2 (gpt2), found in Xenopus laevis (African clawed frog).